We begin with the raw amino-acid sequence, 125 residues long: Small ribosomal subunit protein uS13 (125 aa).

The protein belongs to the universal ribosomal protein uS13 family. Part of the 30S ribosomal subunit. Forms a loose heterodimer with protein S19. Forms two bridges to the 50S subunit in the 70S ribosome.

Its function is as follows. Located at the top of the head of the 30S subunit, it contacts several helices of the 16S rRNA. In the 70S ribosome it contacts the 23S rRNA (bridge B1a) and protein L5 of the 50S subunit (bridge B1b), connecting the 2 subunits; these bridges are implicated in subunit movement. Contacts the tRNAs in the A and P-sites. The polypeptide is Small ribosomal subunit protein uS13 (Granulibacter bethesdensis (strain ATCC BAA-1260 / CGDNIH1)).